A 77-amino-acid polypeptide reads, in one-letter code: Translation initiation factor IF-1, chloroplastic (77 aa).

Positions 1–71 (MKEQKLIHEG…TRGRIIYRLR (71 aa)) constitute an S1-like domain.

It belongs to the IF-1 family. Component of the 30S ribosomal translation pre-initiation complex which assembles on the 30S ribosome in the order IF-2 and IF-3, IF-1 and N-formylmethionyl-tRNA(fMet); mRNA recruitment can occur at any time during PIC assembly.

The protein localises to the plastid. It localises to the chloroplast. Functionally, one of the essential components for the initiation of protein synthesis. Stabilizes the binding of IF-2 and IF-3 on the 30S subunit to which N-formylmethionyl-tRNA(fMet) subsequently binds. Helps modulate mRNA selection, yielding the 30S pre-initiation complex (PIC). Upon addition of the 50S ribosomal subunit IF-1, IF-2 and IF-3 are released leaving the mature 70S translation initiation complex. The sequence is that of Translation initiation factor IF-1, chloroplastic from Acorus calamus var. americanus (American sweet flag).